Consider the following 386-residue polypeptide: O-methyltransferase 12 (386 aa).

5 residues coordinate S-adenosyl-L-homocysteine: Ser-207, Gly-231, Asp-254, Asp-274, and Lys-288. Asp-254 lines the S-adenosyl-L-methionine pocket. Catalysis depends on His-292, which acts as the Proton acceptor.

Belongs to the class I-like SAM-binding methyltransferase superfamily. Cation-independent O-methyltransferase family. As to quaternary structure, homodimer. In terms of tissue distribution, expressed at high levels in all tissues.

It carries out the reaction 4-hydroxy-3,5-dimethoxyphenethylamine + S-adenosyl-L-methionine = mescaline + S-adenosyl-L-homocysteine + H(+). It catalyses the reaction dopamine + S-adenosyl-L-methionine = 4-methoxytyramine + S-adenosyl-L-homocysteine + H(+). It functions in the pathway aromatic compound metabolism. Its pathway is alkaloid biosynthesis. Functionally, O-methyltransferase participating in the biosynthesis of natural products derived from phenylethylamine, including mescaline, a natural hallucinogen potentially used in psychotherapeutic treatments. Catalyzes the O-methylation of dopamine, 4-hydroxy-3,5-dimethoxyphenethylamine, 4,5-dihydroxy-3-methoxyphenethylamine and N-methyl-4,5-dihydroxy-3-methoxyphenethylamine. Also involved in the conversion of N-methyl-4-hydroxy-3,5-dimethoxyphenethylamine to N-methylmescaline. This is O-methyltransferase 12 from Lophophora williamsii (Peyote).